The sequence spans 487 residues: ATP synthase subunit beta, plastid (487 aa).

169–176 (GGAGVGKT) serves as a coordination point for ATP.

Belongs to the ATPase alpha/beta chains family. F-type ATPases have 2 components, CF(1) - the catalytic core - and CF(0) - the membrane proton channel. CF(1) has five subunits: alpha(3), beta(3), gamma(1), delta(1), epsilon(1). CF(0) has four main subunits: a(1), b(1), b'(1) and c(9-12).

It localises to the plastid membrane. The catalysed reaction is ATP + H2O + 4 H(+)(in) = ADP + phosphate + 5 H(+)(out). Its function is as follows. Produces ATP from ADP in the presence of a proton gradient across the membrane. The catalytic sites are hosted primarily by the beta subunits. This Cuscuta pentagona (Five-angled dodder) protein is ATP synthase subunit beta, plastid (atpB).